The chain runs to 51 residues: uncharacterized protein (51 aa).

Residues 1–24 (MGGRFSGRVGIEKGGHPPSAADHS) are disordered.

This is an uncharacterized protein from Escherichia coli.